The primary structure comprises 1499 residues: Ubiquitinating/deubiquitinating enzyme SdeA (1499 aa).

The interval 1 to 193 (MPKYVEGVEL…GKALRENTEK (193 aa)) is deubiquitinase. Residues His64 and Asp80 each act as for deubiquitinase activity in the active site. The active-site Nucleophile; for deubiquitinase activity is the Cys118. The mono-ADP-ribosyltransferase stretch occupies residues 760–1000 (PPTRLFRGLN…KALAAFPSDT (241 aa)). Residue 766 to 772 (RGLNLSE) participates in NAD(+) binding. Glu860 bears the 5-glutamyl glutamate mark. Glu862 serves as a coordination point for NAD(+). Positions 1059–1181 (KEMGTIRREL…IDTKLADAYL (123 aa)) form a coiled coil.

The protein belongs to the SidE family. Interacts with IcmS. Post-translationally, is able to ubiquitinate itself, but this modification is not required to ubiquitinate Rab33b. In terms of processing, glutamylated at Glu-860 by SidJ; glutamylation inhibits SdeA activity to catalyze the production of ADP-ribosylated ubiquitin.

The protein resides in the secreted. It is found in the host cell. It catalyses the reaction L-arginyl-[protein] + NAD(+) = N(omega)-(ADP-D-ribosyl)-L-arginyl-[protein] + nicotinamide + H(+). Ubiquitination catalyzed by SdeA is insensitive to the cysteine alkylation agent maleimide, suggesting that a cysteine conjugation of ubiquitin does not form during the reaction. Functionally, secreted effector that interferes with the host cell ubiquitin pathway and is required for intracellular bacterial replication. Catalyzes the ubiquitination of several mammalian Rab proteins (Rab33b, Rab1, Rab6a and Rab30) during L.pneumophila infection, without engaging the standard cellular enzyme cascade (E1 and E2). Transfers an ADP-ribose moiety from NAD to the 'Arg-42' residue of ubiquitin in a reaction that releases nicotinamide. The modified ubiquitin is subsequently transferred to serine residues of the substrate protein via a phosphoribose linker that results in the release of AMP. Cannot ubiquitinate the endosomal Rab5 or the cytoskeletal small GTPase Rac1. Also acts as a deubiquitinase (DUB), catalyzing the cleavage of three of the most abundant polyubiquitin chains ('Lys-11', 'Lys-48' and 'Lys-63') with a distinct preference for 'Lys-63' linkages; is thus able to efficiently remove 'Lys-63'-linked polyubiquitin chains from the phagosomal surface. Is also able to remove NEDD8 from neddylated proteins, but is unable to recognize SUMO. The DUB activity of SdeA is important for regulating the dynamics of ubiquitin association with the bacterial phagosome, but is dispensable for its role in intracellular bacterial replication. In Legionella pneumophila subsp. pneumophila (strain Philadelphia 1 / ATCC 33152 / DSM 7513), this protein is Ubiquitinating/deubiquitinating enzyme SdeA.